Consider the following 88-residue polypeptide: Alpha-latrotoxin-associated low molecular weight protein-2 (88 aa).

An N-terminal signal peptide occupies residues 1–19 (MLKLICIAFLVTVLTLVAG). Residue Q20 is modified to Pyrrolidone carboxylic acid. Disulfide bonds link C30–C66, C46–C62, and C49–C75.

It belongs to the arthropod CHH/MIH/GIH/VIH hormone family. In terms of processing, the N-terminus is blocked. Expressed by the venom gland.

Its subcellular location is the secreted. May increase the toxicity of alpha-latrotoxin and/or other venom components. Is non-toxic to mice and to the cockroach Periplaneta americana. This Latrodectus tredecimguttatus (Mediterranean black widow spider) protein is Alpha-latrotoxin-associated low molecular weight protein-2.